The sequence spans 582 residues: MSSLPTSDGFDHPAPSGQSPEVGSPTSLARSVSASVCAIKPGDPNSIESLAMEATKASAEFQTNSKKTDPPPLQVLPDLASSAEQSLAMPFHKSSKEAVVAGNLEKSVEKGTQGLRVYLHTRQDASLTLTTTGMREPQIFAEEKSWHPENQTPSPVNGLQQHRETGSVQREAGQQSVPQDQGCLCDAEDLELHEEVVSLEALRKGELQRHAHLPSAEKGLPASGLCSCPCSEALMEVDTAEQSLVAMCSSTGRQDAVIKSPSVAHLASDNPTMEVETLQSNPSCEPVEHSILTRELQLPEDNVDMSTMDNKDDNSSSLLSGHGQPSVESAEEFCSSVTVALKELHELLVISCKPASEESPEHVTCQSEIGAESQPSVSDLSGRRVQSVHLTPSDQYSQGSCHQATSESGKTEIVGTAPCAAVEDEASTSFEGLGDGLSPDREDVRRSTESARKSCSVAITSAKLSEQLPCTSGVEIAPELAASEGAHSQPSEHVHNPGPDRPETSSVCPGAGLPRSGLDQPPTQSLSTPSVLPPFIFPAADVDRILGAGFTLQEALGALHRVGGNADLALLVLLAKNIVVPT.

Disordered regions lie at residues 1–32 (MSSL…ARSV), 56–76 (KASA…LQVL), 143–180 (EKSW…VPQD), 303–325 (VDMS…HGQP), 363–384 (VTCQ…SGRR), 390–409 (LTPS…SESG), 426–452 (ASTS…ESAR), and 483–529 (SEGA…LSTP). The segment covering 16 to 32 (SGQSPEVGSPTSLARSV) has biased composition (polar residues). Residues 148 to 179 (PENQTPSPVNGLQQHRETGSVQREAGQQSVPQ) are compositionally biased toward polar residues. Over residues 390-408 (LTPSDQYSQGSCHQATSES) the composition is skewed to polar residues. 2 stretches are compositionally biased toward basic and acidic residues: residues 438 to 452 (SPDR…ESAR) and 490 to 503 (PSEH…DRPE). One can recognise a UBA domain in the interval 536 to 576 (IFPAADVDRILGAGFTLQEALGALHRVGGNADLALLVLLAK).

As to quaternary structure, interacts with YRDC. As to expression, expressed in epithelial and subepithelial cells of small intestine.

It is found in the cell membrane. Its subcellular location is the nucleus. The protein localises to the golgi apparatus. The protein resides in the trans-Golgi network. Mediates transcriptional and post-transcriptional regulation of SLC5A1. Inhibits a dynamin and PKC-dependent exocytotic pathway of SLC5A1. Also involved in transcriptional regulation of SLC22A2. Exhibits glucose-dependent, short-term inhibition of SLC5A1 and SLC22A2 by inhibiting the release of vesicles from the trans-Golgi network. Regulates the expression of SLC5A1 in a tissue-specific manner and is specifically involved in its regulation in the small intestine. The polypeptide is Regulatory solute carrier protein family 1 member 1 (Rsc1a1) (Mus musculus (Mouse)).